Consider the following 212-residue polypeptide: Probable NADH dehydrogenase [ubiquinone] iron-sulfur protein 8, mitochondrial (212 aa).

4Fe-4S ferredoxin-type domains are found at residues 104–133 (RRYP…IEAE) and 143–172 (TRYD…EGPN). 8 residues coordinate [4Fe-4S] cluster: C113, C116, C119, C123, C152, C155, C158, and C162.

This sequence belongs to the complex I 23 kDa subunit family. As to quaternary structure, complex I is composed of 45 different subunits This is a component of the iron-sulfur (IP) fragment of the enzyme. [4Fe-4S] cluster is required as a cofactor.

It is found in the mitochondrion. The catalysed reaction is a ubiquinone + NADH + 5 H(+)(in) = a ubiquinol + NAD(+) + 4 H(+)(out). In terms of biological role, core subunit of the mitochondrial membrane respiratory chain NADH dehydrogenase (Complex I) that is believed to belong to the minimal assembly required for catalysis. Complex I functions in the transfer of electrons from NADH to the respiratory chain. The immediate electron acceptor for the enzyme is believed to be ubiquinone. This chain is Probable NADH dehydrogenase [ubiquinone] iron-sulfur protein 8, mitochondrial, found in Caenorhabditis elegans.